A 629-amino-acid chain; its full sequence is tRNA uridine 5-carboxymethylaminomethyl modification enzyme MnmG (629 aa).

Residue Gly13 to Gly18 participates in FAD binding. An NAD(+)-binding site is contributed by Gly273–Phe287.

This sequence belongs to the MnmG family. In terms of assembly, homodimer. Heterotetramer of two MnmE and two MnmG subunits. FAD is required as a cofactor.

It is found in the cytoplasm. In terms of biological role, NAD-binding protein involved in the addition of a carboxymethylaminomethyl (cmnm) group at the wobble position (U34) of certain tRNAs, forming tRNA-cmnm(5)s(2)U34. This chain is tRNA uridine 5-carboxymethylaminomethyl modification enzyme MnmG, found in Shewanella pealeana (strain ATCC 700345 / ANG-SQ1).